The sequence spans 461 residues: Fumarate hydratase class II (461 aa).

Residues 97–99 (SGT), Arg125, 128–131 (HPND), 138–140 (SSN), and Thr186 contribute to the substrate site. The active-site Proton donor/acceptor is the His187. Ser317 is an active-site residue. Substrate contacts are provided by residues Ser318 and 323-325 (KVN).

This sequence belongs to the class-II fumarase/aspartase family. Fumarase subfamily. As to quaternary structure, homotetramer.

It localises to the cytoplasm. The catalysed reaction is (S)-malate = fumarate + H2O. It functions in the pathway carbohydrate metabolism; tricarboxylic acid cycle; (S)-malate from fumarate: step 1/1. In terms of biological role, involved in the TCA cycle. Catalyzes the stereospecific interconversion of fumarate to L-malate. This chain is Fumarate hydratase class II, found in Ralstonia nicotianae (strain ATCC BAA-1114 / GMI1000) (Ralstonia solanacearum).